Here is a 261-residue protein sequence, read N- to C-terminus: Spermatogenesis-associated protein 46 (261 aa).

The disordered stretch occupies residues 140-159 (SSSSSPENTCPREATKKSRH).

In terms of tissue distribution, testis-specific.

It is found in the nucleus membrane. Plays a role in spermiogenesis and fertilization. This Homo sapiens (Human) protein is Spermatogenesis-associated protein 46.